Reading from the N-terminus, the 227-residue chain is Zeamatin (227 aa).

A signal peptide spans 1–20 (MAGSVAIVGIFVALLAVAGE). Disulfide bonds link C30–C226, C72–C82, C87–C93, C139–C215, C145–C198, C153–C163, C167–C176, and C177–C185.

It belongs to the thaumatin family.

Has antifungal activity. Inhibits Candida albicans and Trichoderma reesei; marginal inhibition observed against Alternaria solani and Neurospora crassa. This Zea mays (Maize) protein is Zeamatin (Zlp).